The following is a 118-amino-acid chain: Large ribosomal subunit protein uL22 (118 aa).

Belongs to the universal ribosomal protein uL22 family. In terms of assembly, part of the 50S ribosomal subunit.

Functionally, this protein binds specifically to 23S rRNA; its binding is stimulated by other ribosomal proteins, e.g. L4, L17, and L20. It is important during the early stages of 50S assembly. It makes multiple contacts with different domains of the 23S rRNA in the assembled 50S subunit and ribosome. In terms of biological role, the globular domain of the protein is located near the polypeptide exit tunnel on the outside of the subunit, while an extended beta-hairpin is found that lines the wall of the exit tunnel in the center of the 70S ribosome. This chain is Large ribosomal subunit protein uL22, found in Leuconostoc mesenteroides subsp. mesenteroides (strain ATCC 8293 / DSM 20343 / BCRC 11652 / CCM 1803 / JCM 6124 / NCDO 523 / NBRC 100496 / NCIMB 8023 / NCTC 12954 / NRRL B-1118 / 37Y).